A 136-amino-acid polypeptide reads, in one-letter code: Histone H3 (136 aa).

Residues 1-43 form a disordered region; that stretch reads MARTKQTARKSTGGKAPRKQLASKAARKSAPSTGGVKKPHRYK. Lys5 bears the N6,N6,N6-trimethyllysine; alternate mark. An N6,N6-dimethyllysine; alternate modification is found at Lys5. Residues Lys5 and Lys10 each carry the N6-methyllysine; alternate modification. Lys10 carries the N6-acetyllysine; alternate modification. The residue at position 11 (Ser11) is a Phosphoserine. The residue at position 15 (Lys15) is an N6,N6-dimethyllysine; alternate. N6-methyllysine; alternate is present on residues Lys15, Lys19, Lys24, Lys28, and Lys37. 5 positions are modified to N6-acetyllysine; alternate: Lys15, Lys19, Lys24, Lys28, and Lys37. Lys28 and Lys37 each carry N6,N6,N6-trimethyllysine; alternate. N6,N6-dimethyllysine; alternate is present on residues Lys28 and Lys37. An N6-acetyllysine mark is found at Lys57 and Lys65. The residue at position 80 (Lys80) is an N6,N6,N6-trimethyllysine; alternate. Lys80 carries the post-translational modification N6,N6-dimethyllysine; alternate. Lys80 carries the post-translational modification N6-methyllysine; alternate.

This sequence belongs to the histone H3 family. As to quaternary structure, the nucleosome is a histone octamer containing two molecules each of H2A, H2B, H3 and H4 assembled in one H3-H4 heterotetramer and two H2A-H2B heterodimers. The octamer wraps approximately 147 bp of DNA. In terms of processing, phosphorylated by IPL1 to form H3S10ph. H3S10ph promotes subsequent H3K14ac formation by GCN5 and is required for transcriptional activation through TBP recruitment to the promoters. Post-translationally, mono-, di- and trimethylated by the COMPASS complex to form H3K4me1/2/3. H3K4me activates gene expression by regulating transcription elongation and plays a role in telomere length maintenance. H3K4me enrichment correlates with transcription levels, and occurs in a 5' to 3' gradient with H3K4me3 enrichment at the 5'-end of genes, shifting to H3K4me2 and then H3K4me1. Methylated by SET2 to form H3K36me. H3K36me represses gene expression. Methylated by DOT1 to form H3K79me. H3K79me is required for association of SIR proteins with telomeric regions and for telomeric silencing. The COMPASS-mediated formation of H3K4me2/3 and the DOT1-mediated formation of H3K79me require H2BK123ub1. Acetylation of histone H3 leads to transcriptional activation. H3K14ac formation by GCN5 is promoted by H3S10ph. H3K14ac can also be formed by ESA1. H3K56ac formation occurs predominantly in newly synthesized H3 molecules during G1, S and G2/M of the cell cycle and may be involved in DNA repair.

Its subcellular location is the nucleus. It is found in the chromosome. Core component of nucleosome. Nucleosomes wrap and compact DNA into chromatin, limiting DNA accessibility to the cellular machineries which require DNA as a template. Histones thereby play a central role in transcription regulation, DNA repair, DNA replication and chromosomal stability. DNA accessibility is regulated via a complex set of post-translational modifications of histones, also called histone code, and nucleosome remodeling. This is Histone H3 (HHT1) from Candida glabrata (strain ATCC 2001 / BCRC 20586 / JCM 3761 / NBRC 0622 / NRRL Y-65 / CBS 138) (Yeast).